A 111-amino-acid polypeptide reads, in one-letter code: 2Fe-2S ferredoxin (111 aa).

Residues 1–104 (MPKIFFLPHK…DIEVQIPLYN (104 aa)) form the 2Fe-2S ferredoxin-type domain. [2Fe-2S] cluster is bound by residues Cys-42, Cys-48, Cys-51, and Cys-87.

This sequence belongs to the adrenodoxin/putidaredoxin family. The cofactor is [2Fe-2S] cluster.

Functionally, ferredoxin are iron-sulfur proteins that transfer electrons in a wide variety of metabolic reactions. The polypeptide is 2Fe-2S ferredoxin (fdx) (Buchnera aphidicola subsp. Schizaphis graminum (strain Sg)).